Reading from the N-terminus, the 603-residue chain is Cell division control protein 48 homolog B (603 aa).

ATP contacts are provided by residues 63 to 70 (GPPGTGKT) and 327 to 334 (GPPGCSKT).

Belongs to the AAA ATPase family.

It localises to the nucleus. Its subcellular location is the cytoplasm. The protein localises to the cytoskeleton. It is found in the phragmoplast. Its function is as follows. Probably functions in cell division and growth processes. Interacts with certain SNAREs as part of specialized membrane fusion events where vesicles from the same organelle fuse (homotypic fusion). This chain is Cell division control protein 48 homolog B (CDC48B), found in Arabidopsis thaliana (Mouse-ear cress).